A 275-amino-acid polypeptide reads, in one-letter code: Autophagy protein 5 (275 aa).

N-acetylmethionine is present on Met-1. A Glycyl lysine isopeptide (Lys-Gly) (interchain with G-Cter in ATG12) cross-link involves residue Lys-130.

Belongs to the ATG5 family. Forms a conjugate with ATG12. Part of the minor complex composed of 4 sets of ATG12-ATG5 and ATG16L1 (400 kDa); this complex interacts with ATG3 leading to disruption of ATG7 interaction and promotion of ATG8-like proteins lipidation. Forms an 800-kDa complex composed of ATG12-ATG5 and ATG16L2. The ATG12-ATG5 conjugate interacts with RAB33A; this interaction is bridged by ATG16L1 and promotes ATG12-ATG5-ATG16L1 complex recruitment to phagophores. Interacts with TECPR1; the interaction is direct and does not take place when ATG16L1 is associated with the ATG5-ATG12 conjugate. Interacts with DHX58/RIG-1, IFIH1/MDA5 and MAVS/IPS-1 in monomeric form as well as in ATG12-ATG5 conjugate form. The interaction with MAVS is further enhanced upon vesicular stomatitis virus (VSV) infection. Interacts with ATG3. Interacts with ATG7 and ATG10. Interacts with FADD. Interacts with Bassoon/BSN; this interaction is important for the regulation of presynaptic autophagy. Interacts with ATG16L2. In terms of processing, conjugated to ATG12; which is essential for autophagy, but is not required for association with isolation membrane. Acetylated by EP300.

It is found in the cytoplasm. The protein localises to the preautophagosomal structure membrane. In terms of biological role, involved in autophagic vesicle formation. Conjugation with ATG12, through a ubiquitin-like conjugating system involving ATG7 as an E1-like activating enzyme and ATG10 as an E2-like conjugating enzyme, is essential for its function. The ATG12-ATG5 conjugate acts as an E3-like enzyme which is required for lipidation of ATG8 family proteins and their association to the vesicle membranes. Involved in mitochondrial quality control after oxidative damage, and in subsequent cellular longevity. Plays a critical role in multiple aspects of lymphocyte development and is essential for both B and T lymphocyte survival and proliferation. Required for optimal processing and presentation of antigens for MHC II. Involved in the maintenance of axon morphology and membrane structures, as well as in normal adipocyte differentiation. Promotes primary ciliogenesis through removal of OFD1 from centriolar satellites and degradation of IFT20 via the autophagic pathway. As part of the ATG8 conjugation system with ATG12 and ATG16L1, required for recruitment of LRRK2 to stressed lysosomes and induction of LRRK2 kinase activity in response to lysosomal stress. May play an important role in the apoptotic process, possibly within the modified cytoskeleton. Its expression is a relatively late event in the apoptotic process, occurring downstream of caspase activity. Plays a crucial role in IFN-gamma-induced autophagic cell death by interacting with FADD. In Pongo abelii (Sumatran orangutan), this protein is Autophagy protein 5.